Consider the following 166-residue polypeptide: Probable chemoreceptor glutamine deamidase CheD 1 (166 aa).

Belongs to the CheD family.

The catalysed reaction is L-glutaminyl-[protein] + H2O = L-glutamyl-[protein] + NH4(+). Its function is as follows. Probably deamidates glutamine residues to glutamate on methyl-accepting chemotaxis receptors (MCPs), playing an important role in chemotaxis. The polypeptide is Probable chemoreceptor glutamine deamidase CheD 1 (Leptospira interrogans serogroup Icterohaemorrhagiae serovar copenhageni (strain Fiocruz L1-130)).